The chain runs to 367 residues: Glutamate 5-kinase (367 aa).

Lys8 lines the ATP pocket. Residues Ser49, Asp136, and Asn148 each contribute to the substrate site. ATP contacts are provided by residues 168–169 (TD) and 210–216 (TGGMATK). The region spanning 275–353 (TGKLYLDRGA…EEIPTILGYS (79 aa)) is the PUA domain.

It belongs to the glutamate 5-kinase family.

The protein localises to the cytoplasm. The catalysed reaction is L-glutamate + ATP = L-glutamyl 5-phosphate + ADP. It participates in amino-acid biosynthesis; L-proline biosynthesis; L-glutamate 5-semialdehyde from L-glutamate: step 1/2. Functionally, catalyzes the transfer of a phosphate group to glutamate to form L-glutamate 5-phosphate. The chain is Glutamate 5-kinase from Cyanothece sp. (strain PCC 7425 / ATCC 29141).